The sequence spans 402 residues: MSKRTLASLTAADLEGKRVLVRVDFNVPLDGNGKITDDTRIRAALPTIRYLSESGAKVILVSHFGRPKGKPVESMRLTPVAERLSELLGRPVVKTTDAVGAGAEAQVAATSNGQVVLLENVRFHAEEEANDAEFAKALASLADIYVNDAFGAAHRAHAPTAGVTEYLSPCVAGYLLEKELQYLQAAIDNPQRPLAAIVGGSKVSSKIGVIETLLDKCDKLLIGGGMIFTFYKAQGLSVGGSLVEEDKLDLARSLMAKAQEKGVQLLLPVDVVVADKFAPDANAKTVAIDAIPDGWMGLDIGPESVKQFEGALADCRSVIWNGPMGVFEFDQFAVGTEAIARSLAGLTRKGATTIIGGGDSVAAVEKVGVASEMSHISTGGGASLELLEGKVLPGVAALDDAA.

Substrate contacts are provided by residues 24-26 (DFN), R40, 63-66 (HFGR), R122, and R155. ATP is bound by residues K206, G297, E328, and 357 to 360 (GGDS).

The protein belongs to the phosphoglycerate kinase family. In terms of assembly, monomer.

It localises to the cytoplasm. It catalyses the reaction (2R)-3-phosphoglycerate + ATP = (2R)-3-phospho-glyceroyl phosphate + ADP. Its pathway is carbohydrate degradation; glycolysis; pyruvate from D-glyceraldehyde 3-phosphate: step 2/5. The chain is Phosphoglycerate kinase from Synechococcus sp. (strain ATCC 27144 / PCC 6301 / SAUG 1402/1) (Anacystis nidulans).